The following is a 462-amino-acid chain: Argininosuccinate lyase (462 aa).

It belongs to the lyase 1 family. Argininosuccinate lyase subfamily.

It is found in the cytoplasm. It carries out the reaction 2-(N(omega)-L-arginino)succinate = fumarate + L-arginine. It participates in amino-acid biosynthesis; L-arginine biosynthesis; L-arginine from L-ornithine and carbamoyl phosphate: step 3/3. This chain is Argininosuccinate lyase, found in Dechloromonas aromatica (strain RCB).